A 266-amino-acid polypeptide reads, in one-letter code: HLA class II histocompatibility antigen, DR beta 5 chain (266 aa).

Positions 1–29 (MVCLKLPGGSYMAKLTVTLMVLSSPLALA) are cleaved as a signal peptide. The segment at 30 to 124 (GDTRPRFLQQ…GESFTVQRRV (95 aa)) is beta-1. Residues 30-227 (GDTRPRFLQQ…RAQSESAQSK (198 aa)) lie on the Extracellular side of the membrane. Cystine bridges form between cysteine 44/cysteine 108 and cysteine 146/cysteine 202. N-linked (GlcNAc...) asparagine glycosylation occurs at asparagine 48. The tract at residues 125–227 (EPKVTVYPAR…RAQSESAQSK (103 aa)) is beta-2. The Ig-like C1-type domain occupies 126–214 (PKVTVYPART…EHPSVTSPLT (89 aa)). Residues 228-248 (MLSGVGGFVLGLLFLGAGLFI) form a helical membrane-spanning segment. Residues 249–266 (YFKNQKGHSGLHPTGLVS) lie on the Cytoplasmic side of the membrane.

The protein belongs to the MHC class II family. Heterodimer of an alpha and a beta subunit; also referred as MHC class II molecule. In the endoplasmic reticulum (ER) it forms a heterononamer; 3 MHC class II molecules bind to a CD74 homotrimer (also known as invariant chain or HLA class II histocompatibility antigen gamma chain). In the endosomal/lysosomal system; CD74 undergoes sequential degradation by various proteases; leaving a small fragment termed CLIP on each MHC class II molecule. MHC class II molecule interacts with HLA_DM, and HLA_DO in B-cells, in order to release CLIP and facilitate the binding of antigenic peptides. Post-translationally, ubiquitinated by MARCH1 and MARCH8 at Lys-254 leading to down-regulation of MHC class II.

The protein resides in the cell membrane. Its subcellular location is the endoplasmic reticulum membrane. The protein localises to the golgi apparatus. It localises to the trans-Golgi network membrane. It is found in the endosome membrane. The protein resides in the lysosome membrane. Its subcellular location is the late endosome membrane. Binds peptides derived from antigens that access the endocytic route of antigen presenting cells (APC) and presents them on the cell surface for recognition by the CD4 T-cells. The peptide binding cleft accommodates peptides of 10-30 residues. The peptides presented by MHC class II molecules are generated mostly by degradation of proteins that access the endocytic route, where they are processed by lysosomal proteases and other hydrolases. Exogenous antigens that have been endocytosed by the APC are thus readily available for presentation via MHC II molecules, and for this reason this antigen presentation pathway is usually referred to as exogenous. As membrane proteins on their way to degradation in lysosomes as part of their normal turn-over are also contained in the endosomal/lysosomal compartments, exogenous antigens must compete with those derived from endogenous components. Autophagy is also a source of endogenous peptides, autophagosomes constitutively fuse with MHC class II loading compartments. In addition to APCs, other cells of the gastrointestinal tract, such as epithelial cells, express MHC class II molecules and CD74 and act as APCs, which is an unusual trait of the GI tract. To produce a MHC class II molecule that presents an antigen, three MHC class II molecules (heterodimers of an alpha and a beta chain) associate with a CD74 trimer in the ER to form a heterononamer. Soon after the entry of this complex into the endosomal/lysosomal system where antigen processing occurs, CD74 undergoes a sequential degradation by various proteases, including CTSS and CTSL, leaving a small fragment termed CLIP (class-II-associated invariant chain peptide). The removal of CLIP is facilitated by HLA-DM via direct binding to the alpha-beta-CLIP complex so that CLIP is released. HLA-DM stabilizes MHC class II molecules until primary high affinity antigenic peptides are bound. The MHC II molecule bound to a peptide is then transported to the cell membrane surface. In B-cells, the interaction between HLA-DM and MHC class II molecules is regulated by HLA-DO. Primary dendritic cells (DCs) also to express HLA-DO. Lysosomal microenvironment has been implicated in the regulation of antigen loading into MHC II molecules, increased acidification produces increased proteolysis and efficient peptide loading. The polypeptide is HLA class II histocompatibility antigen, DR beta 5 chain (Homo sapiens (Human)).